The following is a 176-amino-acid chain: Peptidyl-prolyl cis-trans isomerase cyp5 (176 aa).

Positions Phe-10–Glu-173 constitute a PPIase cyclophilin-type domain.

This sequence belongs to the cyclophilin-type PPIase family.

The enzyme catalyses [protein]-peptidylproline (omega=180) = [protein]-peptidylproline (omega=0). Its function is as follows. PPIases accelerate the folding of proteins. It catalyzes the cis-trans isomerization of proline imidic peptide bonds in oligopeptides. This is Peptidyl-prolyl cis-trans isomerase cyp5 (cyp5) from Rhizopus delemar (strain RA 99-880 / ATCC MYA-4621 / FGSC 9543 / NRRL 43880) (Mucormycosis agent).